Here is a 448-residue protein sequence, read N- to C-terminus: uncharacterized protein (448 aa).

A run of 12 helical transmembrane segments spans residues 14 to 34 (PFII…YGII), 59 to 79 (TLLA…GFLA), 87 to 107 (VPML…TFGN), 120 to 140 (GLSA…VVGA), 148 to 168 (GGIF…GGIV), 171 to 191 (SLGY…DIAL), 250 to 270 (IFGP…FDAT), 288 to 308 (LMFG…GAMV), 316 to 333 (IGKR…LLCI), 338 to 358 (TSLN…VLAF), 392 to 412 (FSAY…VAGF), and 417 to 437 (FNFI…SLMA).

Belongs to the major facilitator superfamily. TCR/Tet family.

The protein resides in the endoplasmic reticulum. The protein localises to the membrane. This is an uncharacterized protein from Schizosaccharomyces pombe (strain 972 / ATCC 24843) (Fission yeast).